Here is a 533-residue protein sequence, read N- to C-terminus: MDLKEACGSEASRETESGGMGSLGGHSSWQSFAHRSTLHGLRFIFPYSSSSSSSSSYRSTSRRLLWSAALLASLVLLVLESTERLAYFLSYPHVTSVDAVVSGSLVFPAVTVCNLNAYRFTRLTQNDLYHAGELLALLDVHLQIPEPHLAEPHVLAFLTEKSNFTNYRPKPFSMREFTERVGHDLKEMMLYCRFQGQECSHQDFKTVFTRYGKCYMFNAAEEGKTLRTTMKGGTGNGLEIMLDIQQDEYLPVWGETEETAFEAGVRVQIHSQAEPPFVHELGFGVAPGFQTFVATQEQRLTYLPPPWGECVSRALDSGLFQVYSVSACRIECETRYIVENCNCRMVYMPGDSPYCTPEQYKDCAEPALAALSAVEGTNCICRSPCNMTRYNKELSMVKIPSKTSARYLEKKFNRSEKYITDNILVLDVFFEALNYETIEQKKAYEVAGLLGDIGGQMGLFIGASILTLLELFDYAYEVVKERLLDLLNREEEEESHGEDVSTCDPVVNHSESISHTVSVPLQTTLGTLEEIAC.

Over residues 1–16 the composition is skewed to basic and acidic residues; that stretch reads MDLKEACGSEASRETE. The disordered stretch occupies residues 1–23; that stretch reads MDLKEACGSEASRETESGGMGSL. The Cytoplasmic portion of the chain corresponds to 1–68; it reads MDLKEACGSE…STSRRLLWSA (68 aa). Residues 69–89 traverse the membrane as a helical segment; that stretch reads ALLASLVLLVLESTERLAYFL. Over 90-445 the chain is Extracellular; sequence SYPHVTSVDA…ETIEQKKAYE (356 aa). 6 cysteine pairs are disulfide-bonded: C113–C214, C310–C385, C328–C381, C332–C379, C341–C363, and C343–C355. N163 carries an N-linked (GlcNAc...) asparagine glycan. N-linked (GlcNAc...) asparagine glycans are attached at residues N386 and N413. A helical transmembrane segment spans residues 446–466; sequence VAGLLGDIGGQMGLFIGASIL. The GAS motif; ion selectivity filter motif lies at 462–464; sequence GAS. Topologically, residues 467-533 are cytoplasmic; the sequence is TLLELFDYAY…TLGTLEEIAC (67 aa).

This sequence belongs to the amiloride-sensitive sodium channel (TC 1.A.6) family. ASIC2 subfamily. Can form homotrimers; probably non-functional. Heterotrimer; could form functional heterotrimers producing channel with specific properties depending on their composition. As to expression, expressed in central nervous system.

Its subcellular location is the cell membrane. The catalysed reaction is Na(+)(in) = Na(+)(out). Inhibited by the diuretic drug amiloride. Its function is as follows. Could form pH-gated heterotrimeric sodium channels that act as postsynaptic excitatory sensors in the nervous system, generating rapid, transient inward currents that fully desensitize upon extracellular acidification. This is Acid-sensing ion channel 2 (asic2) from Danio rerio (Zebrafish).